An 813-amino-acid chain; its full sequence is Probable receptor-like protein kinase At5g39020 (813 aa).

A signal peptide spans 1–21 (MNCNVLFLLSVLVSVTAGVTA). The Extracellular segment spans residues 22-437 (AYHPTDVFLF…TPPIKGKPHV (416 aa)). N-linked (GlcNAc...) asparagine glycosylation is found at Asn-46, Asn-61, Asn-165, Asn-202, Asn-213, Asn-263, Asn-286, Asn-293, Asn-384, and Asn-401. A helical transmembrane segment spans residues 438-458 (LVIILIVVGSVIGLATFIVII). At 459–813 (MLLIRQMKRK…QTQTLDSTII (355 aa)) the chain is on the cytoplasmic side. Residues 496–771 (KSFSHTVGKG…KVVEMIEGSL (276 aa)) enclose the Protein kinase domain. Residues 502–510 (VGKGGFGTV) and Lys-524 contribute to the ATP site. Asp-619 (proton acceptor) is an active-site residue. Positions 791–813 (ESSSLSDGQEAEKQTQTLDSTII) are disordered. A compositionally biased stretch (polar residues) spans 804–813 (QTQTLDSTII).

This sequence belongs to the protein kinase superfamily. Ser/Thr protein kinase family.

Its subcellular location is the membrane. The sequence is that of Probable receptor-like protein kinase At5g39020 from Arabidopsis thaliana (Mouse-ear cress).